The chain runs to 423 residues: Elongation factor 1-alpha (423 aa).

The region spanning 5-211 (KEHINLAFIG…DNLEPPEKPT (207 aa)) is the tr-type G domain. The tract at residues 14–21 (GHVDHGKS) is G1. 14-21 (GHVDHGKS) provides a ligand contact to GTP. A Mg(2+)-binding site is contributed by Ser21. Residues 60–64 (GVTID) form a G2 region. The interval 81–84 (DCPG) is G3. GTP is bound by residues 81–85 (DCPGH) and 136–139 (NKMD). Residues 136-139 (NKMD) are G4. A G5 region spans residues 175 to 177 (SAF).

This sequence belongs to the TRAFAC class translation factor GTPase superfamily. Classic translation factor GTPase family. EF-Tu/EF-1A subfamily.

The protein resides in the cytoplasm. It catalyses the reaction GTP + H2O = GDP + phosphate + H(+). Its function is as follows. GTP hydrolase that promotes the GTP-dependent binding of aminoacyl-tRNA to the A-site of ribosomes during protein biosynthesis. This chain is Elongation factor 1-alpha, found in Methanopyrus kandleri (strain AV19 / DSM 6324 / JCM 9639 / NBRC 100938).